A 306-amino-acid chain; its full sequence is Ribonuclease Z (306 aa).

Zn(2+) contacts are provided by histidine 63, histidine 65, aspartate 67, histidine 68, histidine 141, aspartate 211, and histidine 269. The active-site Proton acceptor is the aspartate 67.

This sequence belongs to the RNase Z family. In terms of assembly, homodimer. Zn(2+) is required as a cofactor.

It carries out the reaction Endonucleolytic cleavage of RNA, removing extra 3' nucleotides from tRNA precursor, generating 3' termini of tRNAs. A 3'-hydroxy group is left at the tRNA terminus and a 5'-phosphoryl group is left at the trailer molecule.. Functionally, zinc phosphodiesterase, which displays some tRNA 3'-processing endonuclease activity. Probably involved in tRNA maturation, by removing a 3'-trailer from precursor tRNA. This chain is Ribonuclease Z, found in Staphylococcus aureus (strain USA300).